Reading from the N-terminus, the 163-residue chain is uncharacterized protein (163 aa).

Disordered stretches follow at residues 1 to 78 (MHSL…NPHS) and 115 to 163 (PKWL…LPCH).

This is an uncharacterized protein from Homo sapiens (Human).